We begin with the raw amino-acid sequence, 151 residues long: Small ribosomal subunit protein uS15 (151 aa).

The protein belongs to the universal ribosomal protein uS15 family.

This chain is Small ribosomal subunit protein uS15 (RPS13), found in Zea mays (Maize).